A 156-amino-acid polypeptide reads, in one-letter code: Transcriptional regulator MraZ (156 aa).

2 consecutive SpoVT-AbrB domains span residues 5-51 (TFEK…GKAL) and 80-123 (MAKL…SREA).

This sequence belongs to the MraZ family. Forms oligomers.

It localises to the cytoplasm. Its subcellular location is the nucleoid. In Caulobacter vibrioides (strain ATCC 19089 / CIP 103742 / CB 15) (Caulobacter crescentus), this protein is Transcriptional regulator MraZ.